The following is a 287-amino-acid chain: tRNA selenocysteine 1-associated protein 1 (287 aa).

2 RRM domains span residues 3–86 (ASLW…YVTY) and 96–175 (YSLF…VAIP).

This sequence belongs to the RRM TRSPAP family. As to quaternary structure, component of the tRNA(Sec) complex composed at least of EEFSEC, SECISBP2, SEPHS1, SEPSECS, TRNAU1AP and tRNA(Sec). Found in a complex with tRNA(Sec). Interacts with SEPSECS. Associates with mRNP and/or polysomes. Found in a complex with EEFSEC, SECISBP2, TRNAU1AP and tRNA(Sec).

It is found in the nucleus. The protein resides in the cytoplasm. In terms of biological role, involved in the early steps of selenocysteine biosynthesis and tRNA(Sec) charging to the later steps resulting in the cotranslational incorporation of selenocysteine into selenoproteins. Stabilizes the SECISBP2, EEFSEC and tRNA(Sec) complex. May be involved in the methylation of tRNA(Sec). Enhances efficiency of selenoproteins synthesis. The polypeptide is tRNA selenocysteine 1-associated protein 1 (TRNAU1AP) (Pongo abelii (Sumatran orangutan)).